The sequence spans 292 residues: 4-hydroxy-tetrahydrodipicolinate synthase (292 aa).

Thr46 is a binding site for pyruvate. Tyr134 (proton donor/acceptor) is an active-site residue. Catalysis depends on Lys162, which acts as the Schiff-base intermediate with substrate. Ile204 contributes to the pyruvate binding site.

This sequence belongs to the DapA family. As to quaternary structure, homotetramer; dimer of dimers.

The protein localises to the cytoplasm. The enzyme catalyses L-aspartate 4-semialdehyde + pyruvate = (2S,4S)-4-hydroxy-2,3,4,5-tetrahydrodipicolinate + H2O + H(+). It participates in amino-acid biosynthesis; L-lysine biosynthesis via DAP pathway; (S)-tetrahydrodipicolinate from L-aspartate: step 3/4. Its function is as follows. Catalyzes the condensation of (S)-aspartate-beta-semialdehyde [(S)-ASA] and pyruvate to 4-hydroxy-tetrahydrodipicolinate (HTPA). In Moorella thermoacetica (strain ATCC 39073 / JCM 9320), this protein is 4-hydroxy-tetrahydrodipicolinate synthase.